We begin with the raw amino-acid sequence, 194 residues long: MRHGKKFNHLSRPASHRKALLSNQAKSLILHKRIITTVAKAKALRKFVEPIITKAKQDSTHARRVVFSYFQDKEPVKLLFNEVAPKIGDRPGGYTRIIRLGNRLGDNAEMCMMELVDYNTYLQKAAEPKQTKARTRRGKGKLGATTTVSSEKTQPNTQDMATQAKPVENTQVEGADEQEALDTQSPEQTNKQEE.

Residues Ala-126–Glu-194 form a disordered region. A compositionally biased stretch (basic residues) spans Thr-131–Gly-140. Composition is skewed to polar residues over residues Ala-144 to Ala-161 and Leu-181 to Glu-194.

This sequence belongs to the bacterial ribosomal protein bL17 family. In terms of assembly, part of the 50S ribosomal subunit. Contacts protein L32.

The protein is Large ribosomal subunit protein bL17 of Amoebophilus asiaticus (strain 5a2).